A 361-amino-acid polypeptide reads, in one-letter code: uncharacterized protein (361 aa).

Disordered regions lie at residues Lys-53–Asn-75 and Asn-150–Tyr-211. Over residues Asn-150–Phe-198 the composition is skewed to low complexity. Residues Ile-199–Tyr-211 are compositionally biased toward basic residues. Residues Ile-225–Ile-245 form a helical membrane-spanning segment.

Its subcellular location is the membrane. This is an uncharacterized protein from Dictyostelium discoideum (Social amoeba).